Reading from the N-terminus, the 268-residue chain is Cytochrome c oxidase subunit 3 (268 aa).

The next 7 membrane-spanning stretches (helical) occupy residues 19 to 39, 49 to 69, 85 to 105, 124 to 144, 165 to 185, 202 to 222, and 245 to 265; these read PWPILVSFSLFNLAIGTVLTM, FDLGLAVTVGSILLWTRDIVI, LIIGFILFIISEVFAFISVFW, PVGIIPLDTFSLPLFNTIILL, SIIGLFLTVALALIFSYFQAF, VFFASTGLHGIHVMLGTLFLF, and ILYWHFVDLVWLFLFLVVYFW.

It belongs to the cytochrome c oxidase subunit 3 family. In terms of assembly, component of the cytochrome c oxidase (complex IV, CIV), a multisubunit enzyme composed of a catalytic core of 3 subunits and several supernumerary subunits. The complex exists as a monomer or a dimer and forms supercomplexes (SCs) in the inner mitochondrial membrane with ubiquinol-cytochrome c oxidoreductase (cytochrome b-c1 complex, complex III, CIII).

The protein resides in the mitochondrion inner membrane. The enzyme catalyses 4 Fe(II)-[cytochrome c] + O2 + 8 H(+)(in) = 4 Fe(III)-[cytochrome c] + 2 H2O + 4 H(+)(out). Functionally, component of the cytochrome c oxidase, the last enzyme in the mitochondrial electron transport chain which drives oxidative phosphorylation. The respiratory chain contains 3 multisubunit complexes succinate dehydrogenase (complex II, CII), ubiquinol-cytochrome c oxidoreductase (cytochrome b-c1 complex, complex III, CIII) and cytochrome c oxidase (complex IV, CIV), that cooperate to transfer electrons derived from NADH and succinate to molecular oxygen, creating an electrochemical gradient over the inner membrane that drives transmembrane transport and the ATP synthase. Cytochrome c oxidase is the component of the respiratory chain that catalyzes the reduction of oxygen to water. Electrons originating from reduced cytochrome c in the intermembrane space (IMS) are transferred via the dinuclear copper A center (CU(A)) of subunit 2 and heme A of subunit 1 to the active site in subunit 1, a binuclear center (BNC) formed by heme A3 and copper B (CU(B)). The BNC reduces molecular oxygen to 2 water molecules using 4 electrons from cytochrome c in the IMS and 4 protons from the mitochondrial matrix. The polypeptide is Cytochrome c oxidase subunit 3 (COIII) (Schizophyllum commune (Split gill fungus)).